The following is a 255-amino-acid chain: Keratin-associated protein 10-2 (255 aa).

22 repeat units span residues 26–30 (CCELP), 36–40 (CCAPA), 57–61 (CCQAA), 79–83 (CCQQS), 89–93 (CCTSS), 99–103 (CCVPV), 104–108 (CCKPV), 109–113 (CCVPV), 114–118 (CCGAS), 120–124 (CCQQS), 130–134 (CCASS), 145–149 (CCKAV), 150–154 (CCVPT), 162–166 (CCQQS), 172–176 (CCTSS), 182–186 (CCVSV), 187–191 (CCKPV), 192–196 (CCKSI), 197–201 (CCVPV), 209–213 (CCQQS), 219–223 (CCTSS), and 224–228 (CCRPS). The segment at 26-228 (CCELPCGTPS…CCTSSCCRPS (203 aa)) is 22 X 5 AA repeats of C-C-X(3).

The protein belongs to the KRTAP type 10 family. As to quaternary structure, interacts with hair keratins. Restricted to a narrow region of the hair fiber cuticle, lying approximately 20 cell layers above the apex of the dermal papilla of the hair root; not detected in any other tissues.

Functionally, in the hair cortex, hair keratin intermediate filaments are embedded in an interfilamentous matrix, consisting of hair keratin-associated proteins (KRTAP), which are essential for the formation of a rigid and resistant hair shaft through their extensive disulfide bond cross-linking with abundant cysteine residues of hair keratins. The matrix proteins include the high-sulfur and high-glycine-tyrosine keratins. This chain is Keratin-associated protein 10-2 (KRTAP10-2), found in Homo sapiens (Human).